We begin with the raw amino-acid sequence, 288 residues long: Protein PGR (288 aa).

7 helical membrane-spanning segments follow: residues Met1–Phe21, Leu29–Phe49, Val91–Trp111, Ile123–Trp143, Leu177–Phe197, Leu210–Leu230, and Val268–Phe288.

Belongs to the TMEM19 family. Expressed in the vasculature of leaves, roots, inflorescences, siliques, anther filaments and sepals. Detected primarily in the phloem tissues, including in the root ans shoot apical meristems.

Its subcellular location is the cell membrane. Involved in the glucose-triggered developmental leaf growth process. This Arabidopsis thaliana (Mouse-ear cress) protein is Protein PGR.